We begin with the raw amino-acid sequence, 332 residues long: Phosphate acyltransferase (332 aa).

Belongs to the PlsX family. Homodimer. Probably interacts with PlsY.

Its subcellular location is the cytoplasm. The enzyme catalyses a fatty acyl-[ACP] + phosphate = an acyl phosphate + holo-[ACP]. Its pathway is lipid metabolism; phospholipid metabolism. Its function is as follows. Catalyzes the reversible formation of acyl-phosphate (acyl-PO(4)) from acyl-[acyl-carrier-protein] (acyl-ACP). This enzyme utilizes acyl-ACP as fatty acyl donor, but not acyl-CoA. The polypeptide is Phosphate acyltransferase (Oceanobacillus iheyensis (strain DSM 14371 / CIP 107618 / JCM 11309 / KCTC 3954 / HTE831)).